The following is an 86-amino-acid chain: Mu-theraphotoxin-Hhn1d (86 aa).

An N-terminal signal peptide occupies residues Met-1–Ala-21. Residues Ser-22 to Arg-49 constitute a propeptide that is removed on maturation. Disulfide bonds link Cys-51/Cys-66, Cys-58/Cys-73, and Cys-65/Cys-80. Isoleucine amide is present on Ile-84.

This sequence belongs to the neurotoxin 10 (Hwtx-1) family. 22 (Htx-4) subfamily. In terms of assembly, monomer. As to expression, expressed by the venom gland.

The protein resides in the secreted. Neurotoxin. Selectively blocks neuronal tetrodotoxin-sensitive voltage-gated sodium channels (Nav). Does not affect tetrodotoxin-resistant voltage-gated sodium channels or calcium channels. This chain is Mu-theraphotoxin-Hhn1d, found in Cyriopagopus hainanus (Chinese bird spider).